The chain runs to 245 residues: Ribosomal RNA small subunit methyltransferase G (245 aa).

Residues Gly85, Phe90, 108–110, 136–137, and Arg155 contribute to the S-adenosyl-L-methionine site; these read DST and AE.

Belongs to the methyltransferase superfamily. RNA methyltransferase RsmG family.

It localises to the cytoplasm. Its function is as follows. Specifically methylates the N7 position of a guanine in 16S rRNA. This Trichormus variabilis (strain ATCC 29413 / PCC 7937) (Anabaena variabilis) protein is Ribosomal RNA small subunit methyltransferase G.